Here is a 226-residue protein sequence, read N- to C-terminus: Cytidylate kinase (226 aa).

10–18 (GPASSGKST) contributes to the ATP binding site.

Belongs to the cytidylate kinase family. Type 1 subfamily.

Its subcellular location is the cytoplasm. The enzyme catalyses CMP + ATP = CDP + ADP. It catalyses the reaction dCMP + ATP = dCDP + ADP. This Streptococcus thermophilus (strain ATCC BAA-491 / LMD-9) protein is Cytidylate kinase.